Here is a 205-residue protein sequence, read N- to C-terminus: Recombination protein RecR (205 aa).

A C4-type zinc finger spans residues 58–73 (CKKCHTISDHELCAIC). The region spanning 81–177 (RVVCIVEDIR…KISTIARGIP (97 aa)) is the Toprim domain.

Belongs to the RecR family.

May play a role in DNA repair. It seems to be involved in an RecBC-independent recombinational process of DNA repair. It may act with RecF and RecO. This Cytophaga hutchinsonii (strain ATCC 33406 / DSM 1761 / CIP 103989 / NBRC 15051 / NCIMB 9469 / D465) protein is Recombination protein RecR.